The primary structure comprises 90 residues: MGFRLPGIRKASFSANQASSKAVDVEKGYLAVYVGEKMRRFVIPVSYLNKPSFQDLLSQAEEEFGYHHPNGGLTIPCSEDVFQHITSFLN.

It belongs to the ARG7 family.

The sequence is that of Auxin-induced protein 6B from Glycine max (Soybean).